We begin with the raw amino-acid sequence, 2359 residues long: Nonribosomal peptide synthetase anaPS (2359 aa).

The interval 239-633 (RNATVHGDTL…VRRKDNQVKI (395 aa)) is adenylation 1. A Carrier 1 domain is found at 770–846 (AAQGKGEEAI…ELASAANLSN (77 aa)). Ser-807 carries the O-(pantetheine 4'-phosphoryl)serine modification. Residues 883–1292 (EDIYPSTALQ…VGDLPRMSRQ (410 aa)) are condensation 1. Residues 1321–1709 (LEYPNACAVS…GRKDSQIKIR (389 aa)) form an adenylation 2 region. Residues 1842–1918 (APSNSVEQDL…AIANKIGVVS (77 aa)) form the Carrier 2 domain. Ser-1879 is subject to O-(pantetheine 4'-phosphoryl)serine. The segment at 1936-2356 (LTPIQEFFFE…LVKCLEDLAS (421 aa)) is condensation 2.

It belongs to the NRP synthetase family.

It carries out the reaction anthranilate + L-tryptophan + 2 ATP = (R)-benzodiazepinedione + 2 AMP + 2 diphosphate + H(+). Its pathway is alkaloid biosynthesis. In terms of biological role, nonribosomal peptide synthetase; part of the gene cluster that mediates the biosynthesis of the prenylated pyrroloindoline diketopiperazine acetylaszonalenin. The first step in the pathway is the formation of (R)-benzodiazepinedione by condensation of tryptophan and anthranilic acid catalyzed by the non-ribosomal peptide synthetase anaPS. The prenyltransferase anaPT then converts (R)-benzodiazepinedione to aszonalenin in the presence of dimethylallyl diphosphate (DMAPP) via C3-prenylation. The last step in the biosynthesis of acetylaszonalenin via acetylation of aszonalenin at position N1 catalyzed by anaAT. In Neosartorya fischeri (strain ATCC 1020 / DSM 3700 / CBS 544.65 / FGSC A1164 / JCM 1740 / NRRL 181 / WB 181) (Aspergillus fischerianus), this protein is Nonribosomal peptide synthetase anaPS.